We begin with the raw amino-acid sequence, 129 residues long: Acetophenone carboxylase beta subunit (129 aa).

In terms of assembly, acetophenone carboxylase consists of five subunits; a heterooctameric subcomplex of two alpha (Apc1), two beta (Apc2), two gamma (Apc3) and two delta (Apc4) subunits assembles with the epsilon (Apc5) subunit in an unknown stoichiometry. It depends on Mg(2+) as a cofactor. The cofactor is Mn(2+).

The protein resides in the cytoplasm. It catalyses the reaction acetophenone + hydrogencarbonate + 2 ATP + H2O = 3-oxo-3-phenylpropanoate + 2 ADP + 2 phosphate + 2 H(+). With respect to regulation, inhibited by zinc ions, carbamoylphosphate and beta,gamma-imido-ATP. Its function is as follows. Catalyzes the carboxylation of acetophenone to form 3-oxo-3-phenylpropanoate (benzoylacetate) in the anaerobic catabolism of ethylbenzene. Also carboxylates propiophenone at the same rate and 4-acetyl-pyridine at lower rates. The chain is Acetophenone carboxylase beta subunit (apc2) from Aromatoleum aromaticum (strain DSM 19018 / LMG 30748 / EbN1) (Azoarcus sp. (strain EbN1)).